Consider the following 498-residue polypeptide: MELLTFRDVTIEFSLEEWEFLNPAQQSLYRKVMLENYRNLVSLGLTVSKPELISRLEQRQEPWNVKRHETIAKPPAMSSHYTEDLLPEQCMQDSFQKVILRRYGSCGLEDLHLRKDGENVGECKDQKEIYNGLNQCLSTLPSKIFPYNKCVKVFSKSSNLNRENIRHTTEKLFKCMQCGKVFKSHSGLSYHKIIHTEEKLCICEECGKTFKWFSYLTKHKRIHTGEKPYKCEECGKAFNWCSSLTKHKRIHTGEKPYKCEECGKAFHWCSPFVRHKKIHTGEKPYTCEDCGRAFNRHSHLTKHKTIHTGKKPYKCKECGKAFNHCSLLTIHERTHTGEKPYKCEECGKAFNSSSILTEHKVIHSGEKPYKCEKCDKVFKRFSYLTKHKRIHTGEKPYKCEECGKAFNWSSILTEHKRIHTGEKPYNCEECGKAFNRCSHLTRHKKIHTAVKRYKCEECGKAFKRCSHLNEHKRVQRGEKSCKYKKCGEAFNHCSNLTT.

The KRAB domain maps to 4–75 (LTFRDVTIEF…KRHETIAKPP (72 aa)). C2H2-type zinc fingers lie at residues 173–195 (FKCMQCGKVFKSHSGLSYHKIIH), 201–223 (CICEECGKTFKWFSYLTKHKRIH), 229–251 (YKCEECGKAFNWCSSLTKHKRIH), 257–279 (YKCEECGKAFHWCSPFVRHKKIH), 285–307 (YTCEDCGRAFNRHSHLTKHKTIH), 313–335 (YKCKECGKAFNHCSLLTIHERTH), 341–363 (YKCEECGKAFNSSSILTEHKVIH), 369–391 (YKCEKCDKVFKRFSYLTKHKRIH), 397–419 (YKCEECGKAFNWSSILTEHKRIH), and 425–447 (YNCEECGKAFNRCSHLTRHKKIH). The C2H2-type 11; degenerate zinc finger occupies 453 to 475 (YKCEECGKAFKRCSHLNEHKRVQ).

It belongs to the krueppel C2H2-type zinc-finger protein family.

The protein resides in the nucleus. In terms of biological role, may be involved in transcriptional regulation. The chain is Zinc finger protein 682 (ZNF682) from Homo sapiens (Human).